An 82-amino-acid chain; its full sequence is Small ribosomal subunit protein eS21 (82 aa).

Belongs to the eukaryotic ribosomal protein eS21 family.

The protein is Small ribosomal subunit protein eS21 (RPS21) of Cyanophora paradoxa.